The primary structure comprises 115 residues: MAMTLRDIINKLLRRQPASASTARERLQLVLAHDRSDLSTELLDQMRKEILEVVAKYVEIDVDEGAVSLETEDRMTALVANLPIKRTMTGQIQLKEPKNQSEVDSPETEGKDQNS.

Residues 89 to 115 (TGQIQLKEPKNQSEVDSPETEGKDQNS) form a disordered region.

It belongs to the MinE family.

Prevents the cell division inhibition by proteins MinC and MinD at internal division sites while permitting inhibition at polar sites. This ensures cell division at the proper site by restricting the formation of a division septum at the midpoint of the long axis of the cell. The protein is Cell division topological specificity factor of Prochlorococcus marinus (strain NATL2A).